Consider the following 99-residue polypeptide: Large ribosomal subunit protein bL27 (99 aa).

Positions 1–9 are excised as a propeptide; that stretch reads MLIMNLQLF.

The protein belongs to the bacterial ribosomal protein bL27 family. Post-translationally, the N-terminus is cleaved by ribosomal processing cysteine protease Prp.

The polypeptide is Large ribosomal subunit protein bL27 (Clostridium beijerinckii (strain ATCC 51743 / NCIMB 8052) (Clostridium acetobutylicum)).